The chain runs to 680 residues: DNA-directed RNA polymerase subunit beta' (680 aa).

Positions 69, 71, 87, and 90 each coordinate Zn(2+). Positions 489, 491, and 493 each coordinate Mg(2+).

This sequence belongs to the RNA polymerase beta' chain family. RpoC1 subfamily. In terms of assembly, in plastids the minimal PEP RNA polymerase catalytic core is composed of four subunits: alpha, beta, beta', and beta''. When a (nuclear-encoded) sigma factor is associated with the core the holoenzyme is formed, which can initiate transcription. The cofactor is Mg(2+). Requires Zn(2+) as cofactor.

The protein localises to the plastid. Its subcellular location is the chloroplast. It carries out the reaction RNA(n) + a ribonucleoside 5'-triphosphate = RNA(n+1) + diphosphate. Its function is as follows. DNA-dependent RNA polymerase catalyzes the transcription of DNA into RNA using the four ribonucleoside triphosphates as substrates. This chain is DNA-directed RNA polymerase subunit beta', found in Capsella bursa-pastoris (Shepherd's purse).